The primary structure comprises 61 residues: Protein TfaX (61 aa).

This sequence belongs to the tfa family.

Functionally, might play a role in cell growth during glycolysis. The protein is Protein TfaX (tfaX) of Escherichia coli (strain K12).